We begin with the raw amino-acid sequence, 436 residues long: Putative ankyrin repeat protein FPV245 (436 aa).

10 ANK repeats span residues methionine 1–isoleucine 30, glutamate 34–histidine 63, lysine 67–isoleucine 96, proline 98–threonine 119, lysine 123–isoleucine 152, asparagine 156–valine 185, tyrosine 189–asparagine 218, asparagine 222–valine 252, aspartate 253–isoleucine 283, and asparagine 287–glutamate 317.

The chain is Putative ankyrin repeat protein FPV245 from Vertebrata (FPV).